We begin with the raw amino-acid sequence, 451 residues long: PTS system galactitol-specific EIIC component (451 aa).

Residues 6-435 (MRYILDLGPT…IYLTGIFMTW (430 aa)) enclose the PTS EIIC type-2 domain. 10 helical membrane-spanning segments follow: residues 9–29 (ILDL…SKIL), 41–61 (LHIG…LDSI), 92–112 (ASQI…AMLL), 138–158 (LATG…AFVY), 218–238 (FGPF…IGIL), 305–325 (AVVS…VCVP), 329–349 (VLPF…VAVH), 357–377 (LISG…TIGL), 392–412 (GMVA…IQVF), and 415–435 (QNIP…FMTW).

As to quaternary structure, forms a complex with one each of subunit of GatA, GatB and 2 subunits of GatC.

It is found in the cell inner membrane. The phosphoenolpyruvate-dependent sugar phosphotransferase system (PTS), a major carbohydrate active transport system, catalyzes the phosphorylation of incoming sugar substrates concomitant with their translocation across the cell membrane. The enzyme II complex composed of GatA, GatB and GatC is involved in galactitol transport. The polypeptide is PTS system galactitol-specific EIIC component (gatC) (Escherichia coli O157:H7).